The sequence spans 427 residues: Enolase (427 aa).

Glutamine 163 lines the (2R)-2-phosphoglycerate pocket. The active-site Proton donor is glutamate 205. Aspartate 242, glutamate 285, and aspartate 312 together coordinate Mg(2+). Lysine 337, arginine 366, serine 367, and lysine 388 together coordinate (2R)-2-phosphoglycerate. Lysine 337 serves as the catalytic Proton acceptor.

This sequence belongs to the enolase family. Mg(2+) serves as cofactor.

The protein resides in the cytoplasm. Its subcellular location is the secreted. It localises to the cell surface. It catalyses the reaction (2R)-2-phosphoglycerate = phosphoenolpyruvate + H2O. Its pathway is carbohydrate degradation; glycolysis; pyruvate from D-glyceraldehyde 3-phosphate: step 4/5. Its function is as follows. Catalyzes the reversible conversion of 2-phosphoglycerate (2-PG) into phosphoenolpyruvate (PEP). It is essential for the degradation of carbohydrates via glycolysis. The polypeptide is Enolase (Polaromonas sp. (strain JS666 / ATCC BAA-500)).